A 603-amino-acid polypeptide reads, in one-letter code: UvrABC system protein C (603 aa).

The GIY-YIG domain maps to 13–92 (NGPGVYLMKD…IRKHKPRYNI (80 aa)). The UVR domain occupies 202–237 (NDLLQKIKEQMAAASERQEYELAARLRDRMFAIQAT).

It belongs to the UvrC family. In terms of assembly, interacts with UvrB in an incision complex.

Its subcellular location is the cytoplasm. The UvrABC repair system catalyzes the recognition and processing of DNA lesions. UvrC both incises the 5' and 3' sides of the lesion. The N-terminal half is responsible for the 3' incision and the C-terminal half is responsible for the 5' incision. This is UvrABC system protein C from Desulfatibacillum aliphaticivorans.